A 78-amino-acid chain; its full sequence is Small ribosomal subunit protein uS15c (78 aa).

Belongs to the universal ribosomal protein uS15 family. In terms of assembly, part of the 30S ribosomal subunit.

Its subcellular location is the plastid. The protein localises to the chloroplast. The sequence is that of Small ribosomal subunit protein uS15c (rps15-A) from Saccharum officinarum (Sugarcane).